The chain runs to 277 residues: Undecaprenyl-diphosphatase (277 aa).

7 helical membrane passes run 1–21, 41–61, 90–110, 114–134, 191–211, 224–244, and 255–275; these read MTWI…FLPI, GAAF…IYFW, WLII…EDWI, FRSL…LALA, AFLL…YTSL, ETLV…AWLM, and FVWY…AGVI.

It belongs to the UppP family.

The protein resides in the cell membrane. It carries out the reaction di-trans,octa-cis-undecaprenyl diphosphate + H2O = di-trans,octa-cis-undecaprenyl phosphate + phosphate + H(+). Catalyzes the dephosphorylation of undecaprenyl diphosphate (UPP). Confers resistance to bacitracin. This Micrococcus luteus (strain ATCC 4698 / DSM 20030 / JCM 1464 / CCM 169 / CCUG 5858 / IAM 1056 / NBRC 3333 / NCIMB 9278 / NCTC 2665 / VKM Ac-2230) (Micrococcus lysodeikticus) protein is Undecaprenyl-diphosphatase.